A 177-amino-acid polypeptide reads, in one-letter code: MYCLFCQHTDTRVIDSRVSEDGATIRRRRECEACGERFSTLETIELKLPVIIKKDGGREAFDGRKLRTSFDRALQKRPVAEERIEMAMRAVIHRLRMAGEREVPSIVVGECVMAELRKLDHVGYVRFASVYRSFQDVADFREEIEKLESELLVSREQLPLLEAVMESIGHPSIDQGG.

A zinc finger lies at Cys-3–Cys-34. Residues Pro-49–Asp-139 form the ATP-cone domain.

Belongs to the NrdR family. Zn(2+) serves as cofactor.

Functionally, negatively regulates transcription of bacterial ribonucleotide reductase nrd genes and operons by binding to NrdR-boxes. This Xylella fastidiosa (strain M23) protein is Transcriptional repressor NrdR.